Reading from the N-terminus, the 161-residue chain is 2-C-methyl-D-erythritol 2,4-cyclodiphosphate synthase (161 aa).

Residues Asp9 and His11 each coordinate a divalent metal cation. 4-CDP-2-C-methyl-D-erythritol 2-phosphate is bound by residues 9 to 11 (DFH) and 37 to 38 (HS). His45 contacts a divalent metal cation. 4-CDP-2-C-methyl-D-erythritol 2-phosphate is bound by residues 59–61 (DIG), 64–68 (FPDTD), 135–138 (TTTE), and Arg145.

This sequence belongs to the IspF family. In terms of assembly, homotrimer. A divalent metal cation is required as a cofactor.

It carries out the reaction 4-CDP-2-C-methyl-D-erythritol 2-phosphate = 2-C-methyl-D-erythritol 2,4-cyclic diphosphate + CMP. It functions in the pathway isoprenoid biosynthesis; isopentenyl diphosphate biosynthesis via DXP pathway; isopentenyl diphosphate from 1-deoxy-D-xylulose 5-phosphate: step 4/6. Its function is as follows. Involved in the biosynthesis of isopentenyl diphosphate (IPP) and dimethylallyl diphosphate (DMAPP), two major building blocks of isoprenoid compounds. Catalyzes the conversion of 4-diphosphocytidyl-2-C-methyl-D-erythritol 2-phosphate (CDP-ME2P) to 2-C-methyl-D-erythritol 2,4-cyclodiphosphate (ME-CPP) with a corresponding release of cytidine 5-monophosphate (CMP). This chain is 2-C-methyl-D-erythritol 2,4-cyclodiphosphate synthase, found in Leptospira interrogans serogroup Icterohaemorrhagiae serovar copenhageni (strain Fiocruz L1-130).